Here is a 392-residue protein sequence, read N- to C-terminus: MASRQLLVAPPEALRKPLCTPHRLLLGPGPSNLPPRVLAAGGLQMIGHMHEEMYQVMDEIKQGIQYAFQTRNALTLAVSGSGHCALETALFNLLEPGDAFLVGANGIWGQRAAEVGERIGARVHPMIKDPGSHYTLQEVEECLAQHKPVLLFLTHGESSTGVLQPLDGFGELCHRYKCLLLVDSVASLGGAPIYMDQQGIDVLYSGSQKALNAPPGTSLISFSDKAKSKIYARKTKPFSFYMDVQLLANIWGCDGKPRMYHHTTPVIGIFALRESLALLVEQGLEKSWQRHREVAQHLYRRLQELGLQLFVKDPALRLPTVTTVIVPASYRWRDIVSYVMHHFGIEITGGLGPSADKVLRIGLLGCNATRENVDRLATALREALQHCAQSQL.

At Lys209 the chain carries N6-(pyridoxal phosphate)lysine. Lys225 is modified (N6-acetyllysine; alternate). Position 225 is an N6-succinyllysine; alternate (Lys225). 2 positions are modified to N6-acetyllysine: Lys234 and Lys312. Position 360 (Arg360) interacts with substrate. The short motif at 390 to 392 is the Microbody targeting signal element; sequence SQL.

This sequence belongs to the class-V pyridoxal-phosphate-dependent aminotransferase family. In terms of assembly, homodimer. The cofactor is pyridoxal 5'-phosphate.

Its subcellular location is the peroxisome. The catalysed reaction is L-serine + pyruvate = 3-hydroxypyruvate + L-alanine. It catalyses the reaction glyoxylate + L-alanine = glycine + pyruvate. Functionally, peroxisomal aminotransferase that catalyzes the transamination of glyoxylate to glycine and contributes to the glyoxylate detoxification. Also catalyzes the transamination between L-serine and pyruvate and contributes to gluconeogenesis from the L-serine metabolism. The polypeptide is Alanine--glyoxylate aminotransferase (Oryctolagus cuniculus (Rabbit)).